Here is a 407-residue protein sequence, read N- to C-terminus: Na(+)-translocating NADH-quinone reductase subunit F (407 aa).

A helical transmembrane segment spans residues 6 to 26; it reads IFLAIGMFTAIVLGLVAIILV. The 2Fe-2S ferredoxin-type domain occupies 35–127; that stretch reads GDVTIQINGE…DMQIRVPEEV (93 aa). 4 residues coordinate [2Fe-2S] cluster: cysteine 70, cysteine 76, cysteine 79, and cysteine 111. The region spanning 130-269 is the FAD-binding FR-type domain; the sequence is VKKWECTVES…YGPFGEFFAK (140 aa).

It belongs to the NqrF family. As to quaternary structure, composed of six subunits; NqrA, NqrB, NqrC, NqrD, NqrE and NqrF. Requires [2Fe-2S] cluster as cofactor. FAD is required as a cofactor.

It is found in the cell inner membrane. The catalysed reaction is a ubiquinone + n Na(+)(in) + NADH + H(+) = a ubiquinol + n Na(+)(out) + NAD(+). Functionally, NQR complex catalyzes the reduction of ubiquinone-1 to ubiquinol by two successive reactions, coupled with the transport of Na(+) ions from the cytoplasm to the periplasm. The first step is catalyzed by NqrF, which accepts electrons from NADH and reduces ubiquinone-1 to ubisemiquinone by a one-electron transfer pathway. The polypeptide is Na(+)-translocating NADH-quinone reductase subunit F (Pseudomonas paraeruginosa (strain DSM 24068 / PA7) (Pseudomonas aeruginosa (strain PA7))).